Reading from the N-terminus, the 1502-residue chain is E3 ubiquitin-protein ligase UPL4 (1502 aa).

A compositionally biased stretch (basic and acidic residues) spans 1 to 21 (MENRGQKRMEVVEELPADKRA). A disordered region spans residues 1 to 107 (MENRGQKRME…DYQRQRSSGD (107 aa)). Polar residues predominate over residues 22–46 (CNSQDFRPSTSGSSVQAQANDTNPG). Over residues 67 to 90 (DEEEQEEQDKEDSDYGSCDSDEED) the composition is skewed to acidic residues. The segment covering 91–107 (PRQRVLQDYQRQRSSGD) has biased composition (basic and acidic residues). ARM repeat units lie at residues 143–183 (EESL…YLCD), 186–226 (PPSV…KISR), 228–265 (EPVA…NICK), and 267–306 (LSSE…KIAD). Residues 833–881 (CQAESSSPMEIDSESSDASQLQGSQVEDQTQLPGQQNASSSETSSEKED) form a disordered region. Residues 849 to 875 (DASQLQGSQVEDQTQLPGQQNASSSET) are compositionally biased toward polar residues. A K-box region spans residues 1022–1096 (RPVPHSEFVS…IRHHPQHLSS (75 aa)). Positions 1128–1502 (KMMELYGNQK…TEGQGSFHLS (375 aa)) constitute an HECT domain. C1469 functions as the Glycyl thioester intermediate in the catalytic mechanism.

This sequence belongs to the UPL family. K-HECT subfamily.

The enzyme catalyses S-ubiquitinyl-[E2 ubiquitin-conjugating enzyme]-L-cysteine + [acceptor protein]-L-lysine = [E2 ubiquitin-conjugating enzyme]-L-cysteine + N(6)-ubiquitinyl-[acceptor protein]-L-lysine.. Its pathway is protein modification; protein ubiquitination. Functionally, probable E3 ubiquitin-protein ligase which mediates ubiquitination and subsequent proteasomal degradation of target proteins. The chain is E3 ubiquitin-protein ligase UPL4 (UPL4) from Arabidopsis thaliana (Mouse-ear cress).